We begin with the raw amino-acid sequence, 402 residues long: Elongation factor Tu (402 aa).

Residues 10–212 (KPHINIGTIG…AVDEYIPEPK (203 aa)) enclose the tr-type G domain. The tract at residues 19–26 (GHVDHGKT) is G1. A GTP-binding site is contributed by 19–26 (GHVDHGKT). Threonine 26 is a Mg(2+) binding site. Residues 60–64 (GITIA) form a G2 region. The interval 81–84 (DCPG) is G3. GTP contacts are provided by residues 81 to 85 (DCPGH) and 136 to 139 (NKED). Residues 136-139 (NKED) are G4. A G5 region spans residues 177-179 (SAF).

Belongs to the TRAFAC class translation factor GTPase superfamily. Classic translation factor GTPase family. EF-Tu/EF-1A subfamily. Monomer.

It is found in the cytoplasm. It carries out the reaction GTP + H2O = GDP + phosphate + H(+). In terms of biological role, GTP hydrolase that promotes the GTP-dependent binding of aminoacyl-tRNA to the A-site of ribosomes during protein biosynthesis. This chain is Elongation factor Tu, found in Sulfurovum sp. (strain NBC37-1).